The sequence spans 886 residues: MPEQNPLPFPDGQSAPPSPAGAETGATAAALPPAAPVALDAPAPAAPVLAPARVAKRPWWARLLGRLADPWLSLTIEPEQPGRYDDGKPVVYVLEDYGLSNALILDKACREAGLPSPLVPLPGDPLERKRAYLALSRRSSSNSLIPEQRGGKTHSDSLAKLLQAHRVRADLDVHLVPVSIFVGRAPDKQSGWFAVLFSENWALVGRFRRLLSVLLNGRTTIVRFAPPISLRQTMAEGLPPERTLRKLQRVLRTHFRRIREAVIGPDLSTRRLLVDQVLAADSVREAIATQAKRDNSKPVDAWRKAHAYAWEIAADYSSPVVRSASFLLTHVWNRIYAGVLVHHLDKLKQAAPGHEVVYVPSHRSHMDYLLLSYLLYERGIVPPHIVAGINLNLPVVGTLLRKGGAFFIRRSIRGNALYSAVLSEYVAQLVAGGYSIEYFVEGGRSRTGRLLQPKGGMIAMTLRAYLRQPRKPVLFQPVYIGYEKLMEGNSYLDELTGRPKEKESIWGLLWSIPKVLKQNYGQVVVNFGEPIALNDVLAKHAPEWNGEPLPDDEKPTWLAPAVDTLATQIQTRINCAADVNPINLLALALLSTPKHAMGEADLIAQIELCKKLLAEMPYSDRVTVTPHTPARIITHAEEINVLTRVSHPLGDVLSVSGDTAVLLSYFRNNVLHLFTASSWVACCFQNNRRMSRAGLLRLGRTVYPFLQAELFLPWSEDRFAERIEQTIDMFVREGLLLNVTDDDGGILARNTGQTDEVFRLRAIGHSLQQAFERYYIAISVLVKNGPGVLGAGELESLCQQAAQRLSLLYAPAAPEFFDKTLFRSFIQKLRELRLVWPDENSKLMFDERLDAWAKDAKFILGRELRHTIERVSPEAAKPDVVSPPAE.

The segment at Met1–Ala29 is disordered. Low complexity predominate over residues Ala20–Ala29. An HXXXXD motif motif is present at residues His362–Asp367.

Belongs to the GPAT/DAPAT family.

Its subcellular location is the cell inner membrane. It catalyses the reaction sn-glycerol 3-phosphate + an acyl-CoA = a 1-acyl-sn-glycero-3-phosphate + CoA. It functions in the pathway phospholipid metabolism; CDP-diacylglycerol biosynthesis; CDP-diacylglycerol from sn-glycerol 3-phosphate: step 1/3. This chain is Glycerol-3-phosphate acyltransferase (plsB), found in Xanthomonas campestris pv. campestris (strain ATCC 33913 / DSM 3586 / NCPPB 528 / LMG 568 / P 25).